A 141-amino-acid polypeptide reads, in one-letter code: Nucleoside diphosphate kinase (141 aa).

ATP contacts are provided by Lys11, Phe59, Arg87, Thr93, Arg104, and Asn114. His117 serves as the catalytic Pros-phosphohistidine intermediate.

Belongs to the NDK family. Homotetramer. The cofactor is Mg(2+).

It is found in the cytoplasm. The catalysed reaction is a 2'-deoxyribonucleoside 5'-diphosphate + ATP = a 2'-deoxyribonucleoside 5'-triphosphate + ADP. The enzyme catalyses a ribonucleoside 5'-diphosphate + ATP = a ribonucleoside 5'-triphosphate + ADP. Major role in the synthesis of nucleoside triphosphates other than ATP. The ATP gamma phosphate is transferred to the NDP beta phosphate via a ping-pong mechanism, using a phosphorylated active-site intermediate. This Alkalilimnicola ehrlichii (strain ATCC BAA-1101 / DSM 17681 / MLHE-1) protein is Nucleoside diphosphate kinase.